The chain runs to 427 residues: Putative F-box protein At4g10740 (427 aa).

The region spanning R2–M47 is the F-box domain.

This chain is Putative F-box protein At4g10740, found in Arabidopsis thaliana (Mouse-ear cress).